The following is a 312-amino-acid chain: MTFSNNFHRLETRLQSQAGRAIGDFKMIEDGDTVLVCLSGGKDSYTMLSVLMALQKRAPIDFKLIAMNLDQKQPGFPEDVLPGYLKKVGVEYVIVEADTYSIVKEKVPEGKTTCSLCSRLRRGVIYRTAKELGANKIALGHHRDDIVNTFFLNMFFGGKMKAMPPKLATDNGDHIVIRPLAYCAEKEIAAYARAMEFPIIPCNLCGSQENLQRKKVKEMLLEWERQAPGRIDNIFSALQNVVPSHLADTDLFDFNGLTTGLAKIGEEALFGQTAYDQAPLVFAGSHDDRIEFVRFERNPAGKAPEGAEQPAA.

The PP-loop motif signature appears at 39–44 (SGGKDS). Cys-114, Cys-117, and Cys-205 together coordinate [4Fe-4S] cluster.

The protein belongs to the TtcA family. In terms of assembly, homodimer. Mg(2+) serves as cofactor. Requires [4Fe-4S] cluster as cofactor.

It is found in the cytoplasm. It catalyses the reaction cytidine(32) in tRNA + S-sulfanyl-L-cysteinyl-[cysteine desulfurase] + AH2 + ATP = 2-thiocytidine(32) in tRNA + L-cysteinyl-[cysteine desulfurase] + A + AMP + diphosphate + H(+). It participates in tRNA modification. Functionally, catalyzes the ATP-dependent 2-thiolation of cytidine in position 32 of tRNA, to form 2-thiocytidine (s(2)C32). The sulfur atoms are provided by the cysteine/cysteine desulfurase (IscS) system. The protein is tRNA-cytidine(32) 2-sulfurtransferase of Ralstonia nicotianae (strain ATCC BAA-1114 / GMI1000) (Ralstonia solanacearum).